We begin with the raw amino-acid sequence, 383 residues long: 8-amino-7-oxononanoate synthase (383 aa).

Arginine 22 serves as a coordination point for substrate. Glycine 109–phenylalanine 110 contributes to the pyridoxal 5'-phosphate binding site. Histidine 134 lines the substrate pocket. Serine 178, histidine 206, and threonine 232 together coordinate pyridoxal 5'-phosphate. Lysine 235 is modified (N6-(pyridoxal phosphate)lysine). Threonine 348 lines the substrate pocket.

Belongs to the class-II pyridoxal-phosphate-dependent aminotransferase family. BioF subfamily. In terms of assembly, homodimer. Requires pyridoxal 5'-phosphate as cofactor.

The catalysed reaction is 6-carboxyhexanoyl-[ACP] + L-alanine + H(+) = (8S)-8-amino-7-oxononanoate + holo-[ACP] + CO2. It participates in cofactor biosynthesis; biotin biosynthesis. Its function is as follows. Catalyzes the decarboxylative condensation of pimeloyl-[acyl-carrier protein] and L-alanine to produce 8-amino-7-oxononanoate (AON), [acyl-carrier protein], and carbon dioxide. The sequence is that of 8-amino-7-oxononanoate synthase from Vibrio campbellii (strain ATCC BAA-1116).